The sequence spans 315 residues: Probable cell division protein WhiA (315 aa).

A DNA-binding region (H-T-H motif) is located at residues 280–313 (SLKELGQMLDPQVGKSGINHRLRKIEKIAEELRT).

This sequence belongs to the WhiA family.

Involved in cell division and chromosome segregation. The polypeptide is Probable cell division protein WhiA (Clostridium botulinum (strain Alaska E43 / Type E3)).